Consider the following 77-residue polypeptide: Large ribosomal subunit protein uL24 (77 aa).

The protein belongs to the universal ribosomal protein uL24 family. In terms of assembly, part of the 50S ribosomal subunit.

One of two assembly initiator proteins, it binds directly to the 5'-end of the 23S rRNA, where it nucleates assembly of the 50S subunit. Functionally, one of the proteins that surrounds the polypeptide exit tunnel on the outside of the subunit. In Campylobacter fetus subsp. fetus (strain 82-40), this protein is Large ribosomal subunit protein uL24.